A 509-amino-acid polypeptide reads, in one-letter code: Dihydrolipoyl dehydrogenase, mitochondrial (509 aa).

The N-terminal 35 residues, 1–35 (MQSWSRVYCSLAKRGHFSRISHGLQAVSAVPLRTY), are a transit peptide targeting the mitochondrion. K66 is modified (N6-acetyllysine; alternate). The residue at position 66 (K66) is an N6-succinyllysine; alternate. Residues 71-80 (EKNETLGGTC) and K89 contribute to the FAD site. An intrachain disulfide couples C80 to C85. Residues K104, K122, K132, and K143 each carry the N6-acetyllysine; alternate modification. Residues K104, K122, K132, and K143 each carry the N6-succinyllysine; alternate modification. G154 serves as a coordination point for FAD. An N6-succinyllysine mark is found at K159 and K166. 183 to 185 (TGS) provides a ligand contact to FAD. NAD(+) contacts are provided by residues 220–227 (GAGVIGVE) and E243. N6-succinyllysine is present on residues K273 and K277. An NAD(+)-binding site is contributed by V278. Residues S285 and S297 each carry the phosphoserine modification. G314 lines the NAD(+) pocket. Position 346 is an N6-acetyllysine (K346). FAD contacts are provided by residues D355 and 361–364 (MLAH). N6-acetyllysine; alternate is present on K410. N6-succinyllysine; alternate is present on K410. K417 and K420 each carry N6-acetyllysine. At K430 the chain carries N6-succinyllysine. H487 functions as the Proton acceptor in the catalytic mechanism. A Phosphoserine modification is found at S502. An N6-acetyllysine; alternate modification is found at K505. N6-succinyllysine; alternate is present on K505.

It belongs to the class-I pyridine nucleotide-disulfide oxidoreductase family. In terms of assembly, homodimer. Part of the multimeric pyruvate dehydrogenase complex that contains multiple copies of pyruvate dehydrogenase (subunits PDHA (PDHA1 or PDHA2) and PDHB, E1), dihydrolipoamide acetyltransferase (DLAT, E2) and lipoamide dehydrogenase (DLD, E3). These subunits are bound to an inner core composed of about 48 DLAT and 12 PDHX molecules (by non covalent bonds). The 2-oxoglutarate dehydrogenase complex is composed of OGDH (2-oxoglutarate dehydrogenase; E1), DLST (dihydrolipoamide succinyltransferase; E2), DLD (dihydrolipoamide dehydrogenase; E3) and the assembly factor KGD4. It contains multiple copies of the three enzymatic components (E1, E2 and E3). In the nucleus, the 2-oxoglutarate dehydrogenase complex associates with KAT2A. Interacts with PDHX. The cofactor is FAD. In terms of processing, tyrosine phosphorylated.

It localises to the mitochondrion matrix. The protein resides in the nucleus. Its subcellular location is the cell projection. It is found in the cilium. The protein localises to the flagellum. It localises to the cytoplasmic vesicle. The protein resides in the secretory vesicle. Its subcellular location is the acrosome. It catalyses the reaction N(6)-[(R)-dihydrolipoyl]-L-lysyl-[protein] + NAD(+) = N(6)-[(R)-lipoyl]-L-lysyl-[protein] + NADH + H(+). In terms of biological role, lipoamide dehydrogenase is a component of the glycine cleavage system as well as an E3 component of three alpha-ketoacid dehydrogenase complexes (pyruvate-, alpha-ketoglutarate-, and branched-chain amino acid-dehydrogenase complex). The 2-oxoglutarate dehydrogenase complex is mainly active in the mitochondrion. A fraction of the 2-oxoglutarate dehydrogenase complex also localizes in the nucleus and is required for lysine succinylation of histones: associates with KAT2A on chromatin and provides succinyl-CoA to histone succinyltransferase KAT2A. In monomeric form may have additional moonlighting function as serine protease. Involved in the hyperactivation of spermatazoa during capacitation and in the spermatazoal acrosome reaction. The sequence is that of Dihydrolipoyl dehydrogenase, mitochondrial (DLD) from Canis lupus familiaris (Dog).